Reading from the N-terminus, the 60-residue chain is LTCCNQQSSQPKTTTDCADNSCYKKTWKDHRGTRIERGCGCPQVKPGIKLECCKTNECNN.

4 disulfide bridges follow: cysteine 3/cysteine 22, cysteine 17/cysteine 39, cysteine 41/cysteine 52, and cysteine 53/cysteine 58.

Belongs to the three-finger toxin family. Short-chain subfamily. Type I alpha-neurotoxin sub-subfamily. Expressed by the venom gland.

Its subcellular location is the secreted. Binds to muscle nicotinic acetylcholine receptor (nAChR) and inhibit acetylcholine from binding to the receptor, thereby impairing neuromuscular transmission. This chain is Short neurotoxin C, found in Aipysurus laevis (Olive sea snake).